Here is a 234-residue protein sequence, read N- to C-terminus: Glutathione S-transferase U11 (234 aa).

The region spanning 11–90 (EYVKLLGAWP…YVDETWLSGP (80 aa)) is the GST N-terminal domain. Glutathione-binding positions include 21 to 22 (SP), 47 to 48 (LS), 61 to 62 (QI), and 74 to 75 (ES). The 133-residue stretch at 96–228 (DPFDRAVARF…KLVQFARLKF (133 aa)) folds into the GST C-terminal domain.

It belongs to the GST superfamily. Tau family.

The protein localises to the cytoplasm. The protein resides in the cytosol. It carries out the reaction RX + glutathione = an S-substituted glutathione + a halide anion + H(+). Functionally, may be involved in the conjugation of reduced glutathione to a wide number of exogenous and endogenous hydrophobic electrophiles and have a detoxification role against certain herbicides. This is Glutathione S-transferase U11 (GSTU11) from Arabidopsis thaliana (Mouse-ear cress).